The chain runs to 1877 residues: Phosphatidylinositol 4-kinase stt4 (1877 aa).

The 187-residue stretch at 1305–1491 (PDSDAASSPI…KPILDRVMDK (187 aa)) folds into the PIK helical domain. The tract at residues 1492–1625 (MINSLSGEDK…EVWQSAIFKV (134 aa)) is pleckstrin homology (PH) domain conferring phosphoinositide binding specificity. Residues 1593–1861 (DPEELAVNGT…LIEQSYANKR (269 aa)) form the PI3K/PI4K catalytic domain. The segment at 1599-1605 (VNGTEEE) is G-loop. The catalytic loop stretch occupies residues 1728 to 1736 (QFKDRHNGN). Positions 1747–1771 (HIDFGFIFDIAPGGITFESAPFKLT) are activation loop.

This sequence belongs to the PI3/PI4-kinase family. Type III PI4K subfamily.

It localises to the cytoplasm. The enzyme catalyses a 1,2-diacyl-sn-glycero-3-phospho-(1D-myo-inositol) + ATP = a 1,2-diacyl-sn-glycero-3-phospho-(1D-myo-inositol 4-phosphate) + ADP + H(+). Its function is as follows. Acts on phosphatidylinositol (PI) in the first committed step in the production of the second messenger inositol 1,4,5,-trisphosphate. The chain is Phosphatidylinositol 4-kinase stt4 (stt4) from Schizosaccharomyces pombe (strain 972 / ATCC 24843) (Fission yeast).